Reading from the N-terminus, the 514-residue chain is G-protein coupled receptor Mth (514 aa).

A signal peptide spans 1–24; it reads MKTLLVLRISTVILVVLVIQKSYA. Residues 25–218 are Extracellular-facing; that stretch reads DILECDYFDT…CLIVPSITGQ (194 aa). Disulfide bonds link C29–C83, C85–C90, C94–C188, C95–C106, and C150–C209. A glycan (N-linked (GlcNAc...) asparagine) is linked at N45. 4 N-linked (GlcNAc...) asparagine glycosylation sites follow: N109, N123, N170, and N198. A helical membrane pass occupies residues 219 to 239; the sequence is TVVMISSLICMVLTIAVYLFV. Topologically, residues 240 to 248 are cytoplasmic; that stretch reads KKLQNLHGK. The chain crosses the membrane as a helical span at residues 249–269; sequence CFICYMVCLFMGYLFLLLDLW. Residues 270–278 lie on the Extracellular side of the membrane; it reads QISISFCKP. The helical transmembrane segment at 279 to 299 threads the bilayer; that stretch reads AGFLGYFFVMAAFFWLSVISL. Topologically, residues 300-320 are cytoplasmic; the sequence is HLWNTFRGSSHKANRFLFEHR. Residues 321–341 form a helical membrane-spanning segment; it reads FLAYNTYAWGMAVVLTGITVL. The Extracellular portion of the chain corresponds to 342–370; that stretch reads ADNIVENQDWNPRVGHEGHCWIYTQAWSA. A helical membrane pass occupies residues 371–391; that stretch reads MLYFYGPMVFLIAFNITMFIL. At 392–424 the chain is on the cytoplasmic side; that stretch reads TAKRILGVKKDIQNFAHRQERKQKLNSDKQTYT. Residues 425–445 traverse the membrane as a helical segment; it reads FFLRLFIIMGLSWSLEIGSYF. Residues 446 to 454 lie on the Extracellular side of the membrane; it reads SQSNQTWAN. N449 carries N-linked (GlcNAc...) asparagine glycosylation. A helical membrane pass occupies residues 455 to 475; it reads VFLVADYLNWSQGIIIFILFV. Residues 476 to 514 lie on the Cytoplasmic side of the membrane; sequence LKRSTWRLLQESIRGEGEEVNNSEEEISLENTTTRNVLL.

This sequence belongs to the G-protein coupled receptor 2 family. Mth subfamily. Homodimer.

It localises to the cell membrane. Its function is as follows. Involved in biological aging and stress response. Essential for adult survival. Required in the presynaptic motor neuron to up-regulate neurotransmitter exocytosis at larval glutamatergic neuromuscular junctions (NMJs). Regulates a step associated with docking and clustering of vesicles at release sites. SP/Acp70A and sun are agonists that activate mth in vitro. In Drosophila melanogaster (Fruit fly), this protein is G-protein coupled receptor Mth (mth).